A 119-amino-acid chain; its full sequence is Large ribosomal subunit protein eL31 (119 aa).

Belongs to the eukaryotic ribosomal protein eL31 family.

The chain is Large ribosomal subunit protein eL31 (RPL31) from Cyanophora paradoxa.